A 565-amino-acid chain; its full sequence is Dihydroxy-acid dehydratase (565 aa).

Residue Asp-80 coordinates Mg(2+). [2Fe-2S] cluster is bound at residue Cys-121. Mg(2+)-binding residues include Asp-122 and Lys-123. N6-carboxylysine is present on Lys-123. Cys-194 is a binding site for [2Fe-2S] cluster. Glu-447 lines the Mg(2+) pocket. Ser-473 serves as the catalytic Proton acceptor.

Belongs to the IlvD/Edd family. In terms of assembly, homodimer. [2Fe-2S] cluster is required as a cofactor. It depends on Mg(2+) as a cofactor.

It catalyses the reaction (2R)-2,3-dihydroxy-3-methylbutanoate = 3-methyl-2-oxobutanoate + H2O. The enzyme catalyses (2R,3R)-2,3-dihydroxy-3-methylpentanoate = (S)-3-methyl-2-oxopentanoate + H2O. The protein operates within amino-acid biosynthesis; L-isoleucine biosynthesis; L-isoleucine from 2-oxobutanoate: step 3/4. Its pathway is amino-acid biosynthesis; L-valine biosynthesis; L-valine from pyruvate: step 3/4. Functionally, functions in the biosynthesis of branched-chain amino acids. Catalyzes the dehydration of (2R,3R)-2,3-dihydroxy-3-methylpentanoate (2,3-dihydroxy-3-methylvalerate) into 2-oxo-3-methylpentanoate (2-oxo-3-methylvalerate) and of (2R)-2,3-dihydroxy-3-methylbutanoate (2,3-dihydroxyisovalerate) into 2-oxo-3-methylbutanoate (2-oxoisovalerate), the penultimate precursor to L-isoleucine and L-valine, respectively. This chain is Dihydroxy-acid dehydratase, found in Chlorobium luteolum (strain DSM 273 / BCRC 81028 / 2530) (Pelodictyon luteolum).